A 353-amino-acid chain; its full sequence is Quinolinate synthase (353 aa).

Residues His-47 and Ser-68 each contribute to the iminosuccinate site. Residue Cys-113 participates in [4Fe-4S] cluster binding. Iminosuccinate-binding positions include Tyr-139 to Asn-141 and Ser-156. Cys-200 serves as a coordination point for [4Fe-4S] cluster. Iminosuccinate is bound by residues His-226–Glu-228 and Thr-243. Cys-297 contributes to the [4Fe-4S] cluster binding site.

This sequence belongs to the quinolinate synthase family. Type 1 subfamily. Requires [4Fe-4S] cluster as cofactor.

It localises to the cytoplasm. The catalysed reaction is iminosuccinate + dihydroxyacetone phosphate = quinolinate + phosphate + 2 H2O + H(+). Its pathway is cofactor biosynthesis; NAD(+) biosynthesis; quinolinate from iminoaspartate: step 1/1. Catalyzes the condensation of iminoaspartate with dihydroxyacetone phosphate to form quinolinate. This is Quinolinate synthase from Vibrio cholerae serotype O1 (strain ATCC 39541 / Classical Ogawa 395 / O395).